We begin with the raw amino-acid sequence, 859 residues long: Anoctamin-7 (859 aa).

Topologically, residues 1-297 are cytoplasmic; it reads MLRGQAREED…YFAWLGFYTG (297 aa). The disordered stretch occupies residues 25–50; it reads GCSYGSTAQASEAGKQQVAPSRVGSS. Residues 298 to 318 traverse the membrane as a helical segment; it reads WLLPAAVVGTVVFLVGCFLVF. Residues 319 to 362 are Extracellular-facing; that stretch reads SDIPTQELCHSSDSFDMCPLCSDCSFWLLSSACTLAQAGRLFDH. Residues 363–383 traverse the membrane as a helical segment; sequence GGTVFFSLFMALWAVLLLEYW. Residues 384 to 441 are Cytoplasmic-facing; it reads KRKNATLAYRWDCSDYEDIEERPRPQFAATAPMTALNPITGEDEPYFPEKNRVRRMLA. The chain crosses the membrane as a helical span at residues 442 to 462; sequence GSVVLLMMVAVVIMCLVSVIL. Over 463–492 the chain is Extracellular; the sequence is YRAVMAIIVSRSDNAFLSAWASRIASLTGS. A helical transmembrane segment spans residues 493–513; sequence VVNLVFILILSKVYVLLAQVL. The Cytoplasmic portion of the chain corresponds to 514–530; it reads TRWEMHRTQTEFEDAFT. The chain crosses the membrane as a helical span at residues 531–551; that stretch reads LKVFIFQFVNFYASPVYIAFF. Over 552–651 the chain is Extracellular; the sequence is KGRFVGYPGN…FHEYLEMVLQ (100 aa). The helical transmembrane segment at 652-672 threads the bilayer; the sequence is FGFVTIFVAACPLAPLFALLN. Over 673 to 700 the chain is Cytoplasmic; it reads NWVEIRLDARKFVCEYRRPVAERAQDIG. Residues 701 to 721 traverse the membrane as a helical segment; that stretch reads IWFHILTGLTHLAVISNAFLL. The Extracellular segment spans residues 722-780; the sequence is AFSSDFLPRVYYSWTHAPDLHGFLNFTLARAPPTFTSAHNRTCRYRAFRDDDGHYSPTY. Residues asparagine 746 and asparagine 761 are each glycosylated (N-linked (GlcNAc...) asparagine). Residues 781-801 traverse the membrane as a helical segment; it reads WTLLAIRLAFVIVFEHVVFSI. The Cytoplasmic segment spans residues 802 to 859; it reads GRVLDLLVPDIPESVEIKVKREYYLAKQALAENEALLGATGVKDDQPPSSEPSLGLPA.

It belongs to the anoctamin family. As to expression, highly expressed in the stomach. Expressed at low levels in small intestine and large intestine.

The protein resides in the cell membrane. It localises to the endoplasmic reticulum. It catalyses the reaction a 1,2-diacyl-sn-glycero-3-phospho-L-serine(in) = a 1,2-diacyl-sn-glycero-3-phospho-L-serine(out). The catalysed reaction is a beta-D-galactosyl-(1&lt;-&gt;1')-N-acylsphing-4-enine(out) = a beta-D-galactosyl-(1&lt;-&gt;1')-N-acylsphing-4-enine(in). It carries out the reaction a 1,2-diacyl-sn-glycero-3-phosphocholine(in) = a 1,2-diacyl-sn-glycero-3-phosphocholine(out). Functionally, has calcium-dependent phospholipid scramblase activity; scrambles phosphatidylserine, phosphatidylcholine and galactosylceramide. Does not exhibit calcium-activated chloride channel (CaCC) activity. May play a role in cell-cell interactions. This Mus musculus (Mouse) protein is Anoctamin-7 (Ano7).